Consider the following 205-residue polypeptide: GTP cyclohydrolase-2 (205 aa).

Residue 49–53 (RLHSE) participates in GTP binding. C54, C65, and C67 together coordinate Zn(2+). GTP-binding positions include Q70, 92-94 (EGR), and T114. Residue D126 is the Proton acceptor of the active site. The active-site Nucleophile is R128. GTP contacts are provided by T149 and K154.

This sequence belongs to the GTP cyclohydrolase II family. Zn(2+) serves as cofactor.

The catalysed reaction is GTP + 4 H2O = 2,5-diamino-6-hydroxy-4-(5-phosphoribosylamino)-pyrimidine + formate + 2 phosphate + 3 H(+). It functions in the pathway cofactor biosynthesis; riboflavin biosynthesis; 5-amino-6-(D-ribitylamino)uracil from GTP: step 1/4. Catalyzes the conversion of GTP to 2,5-diamino-6-ribosylamino-4(3H)-pyrimidinone 5'-phosphate (DARP), formate and pyrophosphate. This Pseudomonas putida (strain GB-1) protein is GTP cyclohydrolase-2.